A 454-amino-acid chain; its full sequence is Replicative DNA helicase DnaC (454 aa).

Residues 179–445 (RKGDITGIPT…NKFVNLERRF (267 aa)) form the SF4 helicase domain. 210–217 (ARPSVGKT) contributes to the ATP binding site.

This sequence belongs to the helicase family. DnaB subfamily. In terms of assembly, the DNA replisome assembles sequentially on oriC in this order; DnaA, DnaD, DnaB, DnaI-DnaC helicase. Monomer in the absence of ATP, in its presence forms a probable homohexamer which is not active as a helicase in vitro. Interacts separately and simultaneously with helicase loaders DnaB and DnaI. Interaction with DnaB does not require ATP. Interaction with DnaI requires ATP, probably forms a DnaC(6):DnaI(6) complex, which is not active as a helicase.

The protein localises to the cytoplasm. The protein resides in the nucleoid. It carries out the reaction Couples ATP hydrolysis with the unwinding of duplex DNA at the replication fork by translocating in the 5'-3' direction. This creates two antiparallel DNA single strands (ssDNA). The leading ssDNA polymer is the template for DNA polymerase III holoenzyme which synthesizes a continuous strand.. The enzyme catalyses ATP + H2O = ADP + phosphate + H(+). Functionally, the main replicative DNA helicase, it participates in initiation and elongation during chromosome replication. Travels ahead of the DNA replisome, separating dsDNA into templates for DNA synthesis. The monomer has helicase activity in the presence of DnaI which is further increased by DnaB; the purified oligomeric form (probably a DnaC hexamer) does not have helicase activity in vitro, nor does the DnaC(6):DnaI(6) complex. The direction was not determined but is probably 5'-3'. Helicase activity requires an rNTP and is inactive with dNTPs. Has weak ATPase activity as a monomer, as an oligomer has ATPase activity which is stimulated by single-stranded (ss)DNA and further stimulated by DnaI and more by DnaB. In terms of biological role, deletion of a single T residue in the promoter region (a run of 8 Ts becomes 7 Ts) decreases the helicase levels by 50%, decreasing DNA replication inititation during fast growth in rich medium. Suppresses the synthetic lethality of a dnaA1-yabA deletion for growth on rich medium. The protein is Replicative DNA helicase DnaC of Bacillus subtilis (strain 168).